The sequence spans 252 residues: Homeobox protein EMX2 (252 aa).

The homeobox DNA-binding region spans 154 to 213 (PKRIRTAFSPSQLLRLEHAFEKNHYVVGAERKQLAHSLSLTETQVKVWFQNRRTKFKRQK). The tract at residues 212-252 (QKLEEEGSDSQQKKKGTHHINRWRIATKQASPEEIDVTSDD) is disordered. Positions 224 to 233 (KKKGTHHINR) are enriched in basic residues.

This sequence belongs to the EMX homeobox family. As to quaternary structure, interacts with translation initiation factor EIF4E. As to expression, cerebral cortex.

It localises to the nucleus. The protein resides in the cell projection. Its subcellular location is the axon. In terms of biological role, transcription factor, which in cooperation with EMX1, acts to generate the boundary between the roof and archipallium in the developing brain. May function in combination with OTX1/2 to specify cell fates in the developing central nervous system. In the inner ear, it controls the distribution of GPR156 at hair cell boundaries, and regulates the organization of stereociliary bundles in opposite orientations across the line of polarity reversal (LPR). This Homo sapiens (Human) protein is Homeobox protein EMX2 (EMX2).